A 504-amino-acid polypeptide reads, in one-letter code: Aromatic and large neutral amino acid transporter 5-3 (504 aa).

The segment at 1–24 is disordered; it reads MESTEATMVERKAESPSSGDRARS. Positions 8–24 are enriched in basic and acidic residues; the sequence is MVERKAESPSSGDRARS. The next 6 helical transmembrane spans lie at 76 to 96, 138 to 158, 165 to 185, 206 to 226, 233 to 253, and 256 to 276; these read YVVL…FMNW, HLFT…GIML, FGAL…GFSS, FFPC…IIAV, ISFI…GATF, and VMLG…LFII. The N-linked (GlcNAc...) asparagine glycan is linked to Asn-310. 6 consecutive transmembrane segments (helical) span residues 324-344, 356-376, 381-401, 406-426, 436-456, and 475-495; these read LSFL…LFFA, EANQ…GGIA, IVPV…LMLI, CFAA…SFLV, IFYP…GGII, and MTVL…FMYV.

This sequence belongs to the SLC43A transporter (TC 2.A.1.44) family.

It localises to the cell membrane. The enzyme catalyses L-tyrosine(in) = L-tyrosine(out). With respect to regulation, L-tyrosine uptake is stimulated in trans by aromatic and large neutral amino acids, but not smaller or charged amino acids. In terms of biological role, L-tyrosine transporter that is essential for parasite survival and virulence. May also act as an aromatic and large neutral amino acid transporter. Does not cotransport other charged ions. Involved in amino acid homeostasis by facilitating the net uptake of L-tyrosine and maintaining intracellular pools of aromatic and large neutral amino acids through exchange. The polypeptide is Aromatic and large neutral amino acid transporter 5-3 (Toxoplasma gondii).